The following is a 493-amino-acid chain: Vacuolar-processing enzyme (493 aa).

A signal peptide spans methionine 1–leucine 19. Residue asparagine 147 is glycosylated (N-linked (GlcNAc...) asparagine). Histidine 174 is an active-site residue. Catalysis depends on cysteine 216, which acts as the Nucleophile. A disulfide bridge links cysteine 249 with cysteine 263. N-linked (GlcNAc...) asparagine glycans are attached at residues asparagine 295 and asparagine 331. 2 disulfides stabilise this stretch: cysteine 429-cysteine 459 and cysteine 441-cysteine 476.

This sequence belongs to the peptidase C13 family.

In terms of biological role, asparagine-specific endopeptidase involved in the processing of vacuolar seed protein precursors into the mature forms. This is Vacuolar-processing enzyme from Vicia sativa (Spring vetch).